Reading from the N-terminus, the 420-residue chain is MRIGILTIGNELITGRIKDANASYIAREMNIQGWRVPILMSVDDDEAAIKTALDHILGMADAVIVTGGLGPTADDKTTAAVARAYGLKLYRDEAVLRRIRGIFERYGFHWAPGNDKQADFPEGAELIANPVGTAWGFSLNVQGKLIAVLPGVPGELRRMLPEGVLPILRRMFPAAVSAVATRTFKLTGISEAEVDSKLADADLEGQGVEVGFYPDFPELRLVLTVRKKTEAEAQSILKNAEAQAVQRLERQIFACDDETLEGAVAALLTERKLTLAVAESCTGGLITDRLTDISGSSVFLERGAVTYSNLAKTELLGVPESILGEHGAVSEPTARLMAEGVRRLGHTDLGLATTGIAGPTGGTEQKPLGTVFIALADGRETLCRHYHFRWGDRRRVKVATSQAALMMLKRYLAAGSAPKK.

It belongs to the CinA family.

The chain is CinA-like protein from Syntrophus aciditrophicus (strain SB).